We begin with the raw amino-acid sequence, 1267 residues long: RNA-directed RNA polymerase lambda-3 (1267 aa).

Residues 555–792 (LSPTSGSAVI…KLYFIFGCRI (238 aa)) form the RdRp catalytic domain.

Belongs to the reoviridae RNA-directed RNA polymerase family.

It localises to the virion. It carries out the reaction RNA(n) + a ribonucleoside 5'-triphosphate = RNA(n+1) + diphosphate. Its function is as follows. RNA-directed RNA polymerase that is involved in transcription and genome replication. Following infection, it catalyzes the synthesis of fully conservative plus strands. After core assembly, which consists in recruitment of one capped plus-strand for each genomic segments and polymerase complexes, the polymerase switches mode and catalyzes the synthesis of complementary minus-strands. In Reovirus type 3 (strain Dearing) (T3D), this protein is RNA-directed RNA polymerase lambda-3 (L1).